We begin with the raw amino-acid sequence, 1383 residues long: Insulin receptor (1383 aa).

Positions methionine 1–glycine 26 are cleaved as a signal peptide. Extracellular-side segments run histidine 27–serine 759 and serine 764–lysine 957. Cysteine 34 and cysteine 52 are disulfide-bonded. N-linked (GlcNAc...) asparagine glycans are attached at residues asparagine 42, asparagine 51, asparagine 104, and asparagine 137. Disulfide bonds link cysteine 152–cysteine 181, cysteine 185–cysteine 208, cysteine 195–cysteine 214, cysteine 218–cysteine 227, cysteine 222–cysteine 233, cysteine 234–cysteine 242, cysteine 238–cysteine 251, cysteine 254–cysteine 263, and cysteine 267–cysteine 279. N-linked (GlcNAc...) asparagine glycosylation occurs at asparagine 241. Residue asparagine 281 is glycosylated (N-linked (GlcNAc...) asparagine). 5 disulfides stabilise this stretch: cysteine 285–cysteine 310, cysteine 292–cysteine 300, cysteine 314–cysteine 327, cysteine 330–cysteine 334, and cysteine 338–cysteine 359. A glycan (N-linked (GlcNAc...) asparagine) is linked at asparagine 321. N-linked (GlcNAc...) asparagine glycosylation is present at asparagine 363. Residue serine 399 is modified to Phosphoserine. The residue at position 400 (tyrosine 400) is a Phosphotyrosine. Residue serine 406 is modified to Phosphoserine. N-linked (GlcNAc...) asparagine glycans are attached at residues asparagine 423 and asparagine 444. Cysteine 461 and cysteine 494 are disulfide-bonded. Residues asparagine 540, asparagine 634, asparagine 652, and asparagine 699 are each glycosylated (N-linked (GlcNAc...) asparagine). The Fibronectin type-III 1 domain occupies valine 625 to serine 727. An intrachain disulfide couples cysteine 675 to cysteine 900. The tract at residues serine 687–glutamate 709 is disordered. Residues glutamate 734–phenylalanine 742 form an insulin-binding region. Residues threonine 747–asparagine 783 form a disordered region. 2 consecutive Fibronectin type-III domains span residues glutamate 754–glutamate 848 and isoleucine 854–tyrosine 948. Residues asparagine 770, asparagine 783, asparagine 921, and asparagine 934 are each glycosylated (N-linked (GlcNAc...) asparagine). The span at valine 771–asparagine 783 shows a compositional bias: polar residues. The helical transmembrane segment at isoleucine 958–leucine 978 threads the bilayer. At phenylalanine 979–serine 1383 the chain is on the cytoplasmic side. An important for interaction with IRS1, SHC1 and STAT5B region spans residues asparagine 997–tyrosine 1000. Tyrosine 1000 carries the phosphotyrosine; by autocatalysis modification. A Protein kinase domain is found at isoleucine 1024 to phenylalanine 1299. ATP-binding residues include serine 1034 and lysine 1058. Lysine 1080 is covalently cross-linked (Glycyl lysine isopeptide (Lys-Gly) (interchain with G-Cter in ubiquitin)). S-nitrosocysteine is present on cysteine 1084. Glutamate 1105–aspartate 1111 contributes to the ATP binding site. Aspartate 1160 functions as the Proton donor/acceptor in the catalytic mechanism. Residues arginine 1164–asparagine 1165 and aspartate 1178 contribute to the ATP site. Phosphotyrosine; by autocatalysis occurs at positions 1186, 1190, 1191, 1356, and 1362. The interval proline 1361–serine 1383 is disordered. The tract at residues tyrosine 1362–methionine 1365 is PIK3R1 binding.

It belongs to the protein kinase superfamily. Tyr protein kinase family. Insulin receptor subfamily. As to quaternary structure, tetramer of 2 alpha and 2 beta chains linked by disulfide bonds. The alpha chains carry the insulin-binding regions, while the beta chains carry the kinase domain. Forms a hybrid receptor with IGF1R, the hybrid is a tetramer consisting of 1 alpha chain and 1 beta chain of INSR and 1 alpha chain and 1 beta chain of IGF1R. Interacts with SORBS1 but dissociates from it following insulin stimulation. Binds SH2B2. Activated form of INSR interacts (via Tyr-1000) with the PTB/PID domains of IRS1 and SHC1. The sequences surrounding the phosphorylated NPXY motif contribute differentially to either IRS1 or SHC1 recognition. Interacts (via tyrosines in the C-terminus) with IRS2 (via PTB domain and 591-786 AA); the 591-786 would be the primary anchor of IRS2 to INSR while the PTB domain would have a stabilizing action on the interaction with INSR. Interacts with the SH2 domains of the 85 kDa regulatory subunit of PI3K (PIK3R1) in vitro, when autophosphorylated on tyrosine residues. Interacts with SOCS7. Interacts (via the phosphorylated Tyr-1000), with SOCS3. Interacts (via the phosphorylated Tyr-1186, Tyr-1190, Tyr-1191) with SOCS1. Interacts with ARRB2. Interacts with GRB10; this interaction blocks the association between IRS1/IRS2 and INSR, significantly reduces insulin-stimulated tyrosine phosphorylation of IRS1 and IRS2 and thus decreases insulin signaling. Interacts with PDPK1. Interacts (via Tyr-1191) with GRB14 (via BPS domain); this interaction protects the tyrosines in the activation loop from dephosphorylation, but promotes dephosphorylation of Tyr-1000, this results in decreased interaction with, and phosphorylation of, IRS1. Interacts (via subunit alpha) with ENPP1 (via 485-599 AA); this interaction blocks autophosphorylation. Interacts with PTPRE; this interaction is dependent of Tyr-1186, Tyr-1190 and Tyr-1191 of the INSR. Interacts with STAT5B (via SH2 domain). Interacts with PTPRF. Interacts with GRB7. Interacts with CAV2 (tyrosine-phosphorylated form); the interaction is increased with 'Tyr-27'phosphorylation of CAV2. Interacts with ATIC; ATIC together with PRKAA2/AMPK2 and HACD3/PTPLAD1 is proposed to be part of a signaling netwok regulating INSR autophosphorylation and endocytosis. Interacts with the insulin receptor SORL1; this interaction strongly increases its surface exposure, hence strengthens insulin signal reception. Interacts (tyrosine phosphorylated) with CCDC88A/GIV (via SH2-like region); binding requires autophosphorylation of the Insr C-terminal region. Interacts with GNAI3; the interaction is probably mediated by CCDC88A/GIV. Interacts with LMBRD1. Interacts (in response to insulin stimulation) with NCK1; this interaction may recruit PTPN1 to mediate INSR dephosphorylation. Interacts with CD248; this interaction diminishes INSR autophosphorylation. Post-translationally, after being transported from the endoplasmic reticulum to the Golgi apparatus, the single glycosylated precursor is further glycosylated and then cleaved, followed by its transport to the plasma membrane. In terms of processing, autophosphorylated on tyrosine residues in response to insulin. Phosphorylation of Tyr-1000 is required for binding to IRS1, SHC1 and STAT5B. May also be phosphorylated at Tyr-1186 and Tyr-1191 by mTORC2. Dephosphorylated by PTPRE at Tyr-1000, Tyr-1186, Tyr-1190 and Tyr-1191. Dephosphorylated by PTPRF and PTPN1. Dephosphorylated by PTPN2; down-regulates insulin-induced signaling. S-nitrosylation at Cys-1084 by BLVRB inhibits the receptor tyrosine kinase, thereby inhibiting insulin signaling. Post-translationally, ubiquitinated by MARCHF1; leading to degradation thereby reducing surface INSR expression.

It localises to the cell membrane. Its subcellular location is the late endosome. It is found in the lysosome. The enzyme catalyses L-tyrosyl-[protein] + ATP = O-phospho-L-tyrosyl-[protein] + ADP + H(+). Activated in response to insulin. Autophosphorylation activates the kinase activity. PTPN1, PTPRE and PTPRF dephosphorylate important tyrosine residues, thereby reducing INSR activity. Inhibited by ENPP1. GRB10 and GRB14 inhibit the catalytic activity of the INSR, they block access of substrates to the activated receptor. SOCS1 and SOCS3 act as negative regulators of INSR activity, they bind to the activated INRS and interfere with the phosphorylation of INSR substrates. Receptor tyrosine kinase which mediates the pleiotropic actions of insulin. Binding of insulin leads to phosphorylation of several intracellular substrates, including, insulin receptor substrates (IRS1, 2, 3, 4), SHC, GAB1, CBL and other signaling intermediates. Each of these phosphorylated proteins serve as docking proteins for other signaling proteins that contain Src-homology-2 domains (SH2 domain) that specifically recognize different phosphotyrosine residues, including the p85 regulatory subunit of PI3K and SHP2. Phosphorylation of IRSs proteins lead to the activation of two main signaling pathways: the PI3K-AKT/PKB pathway, which is responsible for most of the metabolic actions of insulin, and the Ras-MAPK pathway, which regulates expression of some genes and cooperates with the PI3K pathway to control cell growth and differentiation. Binding of the SH2 domains of PI3K to phosphotyrosines on IRS1 leads to the activation of PI3K and the generation of phosphatidylinositol-(3, 4, 5)-triphosphate (PIP3), a lipid second messenger, which activates several PIP3-dependent serine/threonine kinases, such as PDPK1 and subsequently AKT/PKB. The net effect of this pathway is to produce a translocation of the glucose transporter SLC2A4/GLUT4 from cytoplasmic vesicles to the cell membrane to facilitate glucose transport. Moreover, upon insulin stimulation, activated AKT/PKB is responsible for: anti-apoptotic effect of insulin by inducing phosphorylation of BAD; regulates the expression of gluconeogenic and lipogenic enzymes by controlling the activity of the winged helix or forkhead (FOX) class of transcription factors. Another pathway regulated by PI3K-AKT/PKB activation is mTORC1 signaling pathway which regulates cell growth and metabolism and integrates signals from insulin. AKT mediates insulin-stimulated protein synthesis by phosphorylating TSC2 thereby activating mTORC1 pathway. The Ras/RAF/MAP2K/MAPK pathway is mainly involved in mediating cell growth, survival and cellular differentiation of insulin. Phosphorylated IRS1 recruits GRB2/SOS complex, which triggers the activation of the Ras/RAF/MAP2K/MAPK pathway. In addition to binding insulin, the insulin receptor can bind insulin-like growth factors (IGFI and IGFII). When present in a hybrid receptor with IGF1R, binds IGF1. In adipocytes, inhibits lipolysis. This is Insulin receptor (Insr) from Rattus norvegicus (Rat).